A 158-amino-acid polypeptide reads, in one-letter code: MKCPFCNSEETRVIDTRLTDDGHVVRRRRECEHCGGRFTTYERFEQKPIFVVKKGGQRERFDRNKVLNGILKACEKRPVSIEEIENMSSEIEQEVLRSGKAEISSKEIGEMVMEKLKRKDRVAYVRFASVYKEFRDLDHFMDIIRELKDELKKRDRRD.

A zinc finger lies at C3 to C34. The ATP-cone domain maps to I49–H139.

This sequence belongs to the NrdR family. Zn(2+) is required as a cofactor.

In terms of biological role, negatively regulates transcription of bacterial ribonucleotide reductase nrd genes and operons by binding to NrdR-boxes. This Kosmotoga olearia (strain ATCC BAA-1733 / DSM 21960 / TBF 19.5.1) protein is Transcriptional repressor NrdR.